The sequence spans 956 residues: Zinc fingers and homeoboxes protein 3 (956 aa).

The segment at 1-107 is required for nuclear localization; it reads MASKRKSTTP…SEHTDFNKDP (107 aa). The segment at 22 to 66 is disordered; that stretch reads DASMEAQPAETLPEGPQQDLPPEASAASSEAAQNPSSTDGSTLAN. Residues 42–58 show a composition bias toward low complexity; sequence PPEASAASSEAAQNPSS. 2 C2H2-type zinc fingers span residues 77–100 and 109–132; these read YSCKYCDFRSHDMTQFVGHMNSEH and FVCSGCSFLAKTPEGLSLHNATCH. The interval 242-488 is required for homodimerization and interaction with NFYA; sequence ASASSAKNPH…LLTACPSITS (247 aa). Positions 303-502 are required for repressor activity; that stretch reads LSSIPTYNAA…DASIYKNKKS (200 aa). DNA-binding regions (homeobox) lie at residues 304–363 and 494–553; these read SSIP…GISW and ASIY…RNLK. Residues 497-555 are required for nuclear localization; the sequence is YKNKKSHEQLSALKGSFCRNQFPGQSEVEHLTKVTGLSTREVRKWFSDRRYHCRNLKGS. 2 disordered regions span residues 598–618 and 666–695; these read PSAKRQSWHQTPDFTPTKYKE and KVNAEETKKAEENASQEEEEAAEDEGGEED. Residues Ser-599 and Ser-604 each carry the phosphoserine modification. Positions 612-671 form a DNA-binding region, homeobox 3; it reads TPTKYKERAPEQLRALESSFAQNPLPLDEELDRLRSETKMTRREIDSWFSERRKKVNAEE. Basic and acidic residues predominate over residues 666–677; it reads KVNAEETKKAEE. The segment covering 679-695 has biased composition (acidic residues); sequence ASQEEEEAAEDEGGEED. Phosphoserine occurs at positions 680, 708, and 723. 2 consecutive DNA-binding regions (homeobox) follow at residues 764 to 823 and 835 to 894; these read PGKV…KNGQ and FPPG…TRAV. A disordered region spans residues 890 to 956; it reads ETRAVADTGS…PQAGRQLETD (67 aa). A phosphoserine mark is found at Ser-927 and Ser-946.

This sequence belongs to the ZHX family. In terms of assembly, homodimer (via homeobox domain 1). Heterodimer with ZHX1 (via homeobox domain 1). Heterodimer with ZHX2 (via homeobox domain 1). Heterodimerization with ZHX1 is a prerequisite for repressor activity. Interacts with NFYA. Widely expressed. High expression in kidney. Expressed during osteogenic differentiation.

It localises to the nucleus. Functionally, acts as a transcriptional repressor. Involved in the early stages of mesenchymal stem cell (MSC) osteogenic differentiation. Is a regulator of podocyte gene expression during primary glomerula disease. Binds to promoter DNA. This Homo sapiens (Human) protein is Zinc fingers and homeoboxes protein 3 (ZHX3).